The primary structure comprises 418 residues: Probable carboxypeptidase AFLA_000940 (418 aa).

The first 18 residues, 1–18 (MKATDLFHVTVLVAGALA), serve as a signal peptide directing secretion. Asn-74 carries an N-linked (GlcNAc...) asparagine glycan. Zn(2+) is bound at residue Asp-147. N-linked (GlcNAc...) asparagine glycosylation is present at Asn-168. Glu-179 serves as the catalytic Proton acceptor. Position 180 (Glu-180) interacts with Zn(2+).

It belongs to the peptidase M20A family. Zn(2+) serves as cofactor.

The protein resides in the secreted. The chain is Probable carboxypeptidase AFLA_000940 from Aspergillus flavus (strain ATCC 200026 / FGSC A1120 / IAM 13836 / NRRL 3357 / JCM 12722 / SRRC 167).